The following is a 604-amino-acid chain: Sulfite reductase [NADPH] flavoprotein alpha-component (604 aa).

The Flavodoxin-like domain maps to 66–204 (VTVLSASQTG…AANAWTDNIA (139 aa)). FMN-binding positions include 72 to 77 (SQTGNA), 119 to 122 (STQG), and 155 to 164 (LGDSSYPNFC). In terms of domain architecture, FAD-binding FR-type spans 239–453 (ADPFPAALLA…VERNDGFRLP (215 aa)). FAD-binding positions include T327, Q361, 391–394 (RLYS), 409–411 (TVG), and 424–427 (GGAS). Residues 524 to 525 (SR), 530 to 534 (KIYVQ), and D566 contribute to the NADP(+) site. Y604 is an FAD binding site.

This sequence belongs to the NADPH-dependent sulphite reductase flavoprotein subunit CysJ family. It in the N-terminal section; belongs to the flavodoxin family. The protein in the C-terminal section; belongs to the flavoprotein pyridine nucleotide cytochrome reductase family. As to quaternary structure, alpha(8)-beta(8). The alpha component is a flavoprotein, the beta component is a hemoprotein. It depends on FAD as a cofactor. FMN is required as a cofactor.

It catalyses the reaction hydrogen sulfide + 3 NADP(+) + 3 H2O = sulfite + 3 NADPH + 4 H(+). It functions in the pathway sulfur metabolism; hydrogen sulfide biosynthesis; hydrogen sulfide from sulfite (NADPH route): step 1/1. Its function is as follows. Component of the sulfite reductase complex that catalyzes the 6-electron reduction of sulfite to sulfide. This is one of several activities required for the biosynthesis of L-cysteine from sulfate. The flavoprotein component catalyzes the electron flow from NADPH -&gt; FAD -&gt; FMN to the hemoprotein component. In Neisseria meningitidis serogroup C (strain 053442), this protein is Sulfite reductase [NADPH] flavoprotein alpha-component.